Reading from the N-terminus, the 268-residue chain is (+)-cis,trans-nepetalactol synthase NEPS2 (268 aa).

Residues 16-22 (GGASGIG), 41-43 (DIQ), 65-66 (DI), Asn-92, 163-167 (YVMSK), and 196-200 (VLTPL) contribute to the NAD(+) site.

This sequence belongs to the short-chain dehydrogenases/reductases (SDR) family.

The enzyme catalyses (S)-8-oxocitronellyl enol = cis-trans-nepetalactol. In terms of biological role, functions as a non-oxidoreductive cyclase to promote the formation of cis-trans-nepetalactol. Cis-trans-nepetalactol is then oxidized by NEPS1 into cis-trans-nepetalactone, which belongs to a family of metabolites that are both insect-repellent and have euphoric effect in cats. Binds NAD(+) as classical short-chain dehydrogenase/reductase (SDR), but does not utilize it for its redox-neutral cyclase activity. The polypeptide is (+)-cis,trans-nepetalactol synthase NEPS2 (Nepeta racemosa (Catmint)).